The primary structure comprises 273 residues: NH(3)-dependent NAD(+) synthetase (273 aa).

45 to 52 (GISGGQDS) contributes to the ATP binding site. Aspartate 51 is a Mg(2+) binding site. Arginine 139 is a binding site for deamido-NAD(+). Residue threonine 159 coordinates ATP. Residue glutamate 164 coordinates Mg(2+). Deamido-NAD(+) contacts are provided by lysine 172 and aspartate 179. Positions 188 and 210 each coordinate ATP. Deamido-NAD(+) is bound at residue 259–260 (HK).

Belongs to the NAD synthetase family. As to quaternary structure, homodimer.

It carries out the reaction deamido-NAD(+) + NH4(+) + ATP = AMP + diphosphate + NAD(+) + H(+). It participates in cofactor biosynthesis; NAD(+) biosynthesis; NAD(+) from deamido-NAD(+) (ammonia route): step 1/1. In terms of biological role, catalyzes the ATP-dependent amidation of deamido-NAD to form NAD. Uses ammonia as a nitrogen source. This Bacillus pumilus (strain SAFR-032) protein is NH(3)-dependent NAD(+) synthetase.